Consider the following 693-residue polypeptide: Elongation factor G (693 aa).

The region spanning 8–283 (NKVRNFGIAA…AVCDYLPSPL (276 aa)) is the tr-type G domain. GTP-binding positions include 17-24 (AHIDAGKT), 81-85 (DTPGH), and 135-138 (NKMD).

Belongs to the TRAFAC class translation factor GTPase superfamily. Classic translation factor GTPase family. EF-G/EF-2 subfamily.

Its subcellular location is the cytoplasm. Catalyzes the GTP-dependent ribosomal translocation step during translation elongation. During this step, the ribosome changes from the pre-translocational (PRE) to the post-translocational (POST) state as the newly formed A-site-bound peptidyl-tRNA and P-site-bound deacylated tRNA move to the P and E sites, respectively. Catalyzes the coordinated movement of the two tRNA molecules, the mRNA and conformational changes in the ribosome. This Endomicrobium trichonymphae protein is Elongation factor G.